Here is a 477-residue protein sequence, read N- to C-terminus: Cysteine--tRNA ligase (477 aa).

C29 provides a ligand contact to Zn(2+). The short motif at 31-41 is the 'HIGH' region element; it reads PTVYNYFHVGN. C209, H234, and E238 together coordinate Zn(2+). The short motif at 267-271 is the 'KMSKS' region element; that stretch reads KMSKS. K270 is an ATP binding site.

This sequence belongs to the class-I aminoacyl-tRNA synthetase family. In terms of assembly, monomer. Requires Zn(2+) as cofactor.

The protein resides in the cytoplasm. It carries out the reaction tRNA(Cys) + L-cysteine + ATP = L-cysteinyl-tRNA(Cys) + AMP + diphosphate. The polypeptide is Cysteine--tRNA ligase (Desulfitobacterium hafniense (strain DSM 10664 / DCB-2)).